The chain runs to 1543 residues: Rho guanine nucleotide exchange factor 12 (1543 aa).

The tract at residues 1 to 62 (MSGTQSTITD…KTKSSSEESR (62 aa)) is disordered. Serine 2 is modified (N-acetylserine). A compositionally biased stretch (basic and acidic residues) spans 28–45 (SPTDKKQKVERSSSHDFD). Serine 41 carries the phosphoserine modification. Residues 72 to 151 (CVIIQKDDNG…LTVQGRPPGS (80 aa)) enclose the PDZ domain. A coiled-coil region spans residues 194–262 (VGEENNVVHN…LSKATGSAQD (69 aa)). The segment at 281-355 (AEADPGDGLC…GAPHIIGAED (75 aa)) is disordered. Residues 293-312 (DWSSGDASRPSSDSADSPKS) show a composition bias toward low complexity. At serine 309 the chain carries Phosphoserine. Residues 313 to 329 (SLRERSYLEEAPERSEG) show a composition bias toward basic and acidic residues. Serine 341 bears the Phosphoserine mark. One can recognise an RGSL domain in the interval 367–558 (GQCSCFQSIE…LMYMKYLGVK (192 aa)). A disordered region spans residues 574–710 (FLPKIKQSMK…DSTPRVPTTV (137 aa)). Residues 582–592 (MKKDREGEEKG) are compositionally biased toward basic and acidic residues. Serine 637 carries the phosphoserine modification. Positions 663 to 676 (ASSMSSATSGTALS) are enriched in low complexity. Phosphothreonine is present on threonine 736. The DH domain occupies 787–977 (KRQEVINELF…RQILNYVNQA (191 aa)). The stretch at 981-1004 (AENKQRLEDYQRRLDTSNLKLSEY) forms a coiled coil. In terms of domain architecture, PH spans 1019-1132 (KMIHEGPLVW…WQDLICRMAA (114 aa)). Residues 1137–1158 (QSTKPIPLPQPPPCEGDNDEEE) are disordered. A phosphoserine mark is found at serine 1288, serine 1327, and serine 1377. 2 disordered regions span residues 1386-1405 (EAHS…KEEK) and 1441-1468 (PVTG…GPVS). Positions 1450 to 1460 (SSHQQQHSPQN) are enriched in polar residues. Phosphoserine is present on residues serine 1457 and serine 1540.

Interacts with GNA12 and GNA13, probably through the RGS-like domain, with RHOA, PLXNB1 and PLXNB2, and through its PDZ domain with IGF1R beta subunit. Interacts with GCSAM. Found in a complex with ARHGEF11 and ARHGEF12; binding to ARHGEF11 and ARHGEF12 enhances CDC42 GEF activity of PLEKHG4B, and PLEKHG4B, in turn, inhibits ARHGEF11- and ARHGEF12-mediated RHOA activation. Expressed in brain, predominantly in neuronal cell bodies.

The protein localises to the cytoplasm. It localises to the membrane. Functionally, may play a role in the regulation of RhoA GTPase by guanine nucleotide-binding alpha-12 (GNA12) and alpha-13 (GNA13). Acts as guanine nucleotide exchange factor (GEF) for RhoA GTPase and may act as GTPase-activating protein (GAP) for GNA12 and GNA13. This chain is Rho guanine nucleotide exchange factor 12 (Arhgef12), found in Mus musculus (Mouse).